A 1174-amino-acid polypeptide reads, in one-letter code: K(+) efflux antiporter 2, chloroplastic (1174 aa).

Residues 1-57 constitute a chloroplast transit peptide; that stretch reads MDFASSVQRQSMFHGGADFASYCLPNRMISAKLCPKGLGGTRFWDPMIDSKVRSAIR. Residues 58–565 are Stromal-facing; sequence SKRNVSYRSS…MFPQQEVNEE (508 aa). Positions 119-141 are disordered; the sequence is GSDDREVTFSKEEKDTREQDSAP. Positions 142–350 form a coiled coil; it reads SLEELRDLLN…ALQRAEKTLF (209 aa). The residue at position 170 (lysine 170) is an N6-acetyllysine; by NSI. Residues 420–448 show a composition bias toward basic and acidic residues; the sequence is EAEGEAEKSKNVVLTKKQEVQKDLPRESS. Residues 420–457 form a disordered region; sequence EAEGEAEKSKNVVLTKKQEVQKDLPRESSSHNGTKTSL. A helical transmembrane segment spans residues 566–586; that stretch reads EASLLDVLWLLLASVIFVPLF. Topologically, residues 587 to 592 are chloroplast intermembrane; the sequence is QKIPGG. The chain crosses the membrane as a helical span at residues 593–613; it reads SPVLGYLAAGILIGPYGLSII. The Stromal portion of the chain corresponds to 614–620; the sequence is RNVHGTK. A helical transmembrane segment spans residues 621–641; it reads AIAEFGVVFLLFNIGLELSVE. Over 642-648 the chain is Chloroplast intermembrane; sequence RLSSMKK. Residues 649–669 form a helical membrane-spanning segment; that stretch reads YVFGLGSAQVLVTAAVIGLIT. Residues 670–678 lie on the Stromal side of the membrane; sequence HYVAGQAGP. A helical transmembrane segment spans residues 679 to 699; the sequence is AAIVIGNGLALSSTAVVLQVL. Over 700-713 the chain is Chloroplast intermembrane; sequence QERGESTSRHGRAT. Residues 714–734 form a helical membrane-spanning segment; that stretch reads FSVLLFQDLAVVVLLILIPLI. Residues 735-746 are Stromal-facing; that stretch reads SPNSSKGGIGFQ. The chain crosses the membrane as a helical span at residues 747 to 767; that stretch reads AIAEALGLAAIKAAVAITGII. Residues 768-807 lie on the Chloroplast intermembrane side of the membrane; sequence AGGRLLLRPIYKQIAENRNAEIFSANTLLVILGTSLLTAR. Residues 808-828 form a helical membrane-spanning segment; it reads AGLSMALGAFLAGLLLAETEF. Over 829–841 the chain is Stromal; the sequence is SLQVESDIAPYRG. Residues 842–862 traverse the membrane as a helical segment; it reads LLLGLFFMTVGMSIDPKLLLA. Topologically, residues 863–865 are chloroplast intermembrane; it reads NFP. A helical transmembrane segment spans residues 866–886; the sequence is LIMGTLGLLLVGKTILVVIIG. Topologically, residues 887-898 are stromal; that stretch reads KLFGISIISAVR. A helical transmembrane segment spans residues 899 to 919; it reads VGLLLAPGGEFAFVAFGEAVN. The Chloroplast intermembrane segment spans residues 920 to 928; the sequence is QGIMTPQLS. A helical membrane pass occupies residues 929-949; sequence SLLFLVVGISMALTPWLAAGG. Topologically, residues 950–1174 are stromal; sequence QLIASRFELQ…NQIIEGTLAI (225 aa). The region spanning 975 to 1092 is the RCK N-terminal domain; sequence QGHIIICGFG…EKAGATAVVP (118 aa). Residues 1141–1174 are disordered; it reads SLGYGFSRSTSKPKPPSPSETSDDNQIIEGTLAI.

This sequence belongs to the monovalent cation:proton antiporter 2 (CPA2) transporter (TC 2.A.37) family. KEA (TC 2.A.37.1) subfamily. Acetylated at Lys-170 by the stromal acetyltransferase enzyme NSI. In terms of tissue distribution, detected in leaves, stems and flowers. Expressed in shoots and roots. Mainly localized to leaf veins, hypocotyls, mesophylls and guard cells. Accumulates at high levels in small and dividing plastids (at protein level).

The protein resides in the plastid. It localises to the chloroplast inner membrane. Its subcellular location is the plastid inner membrane. It carries out the reaction K(+)(in) + H(+)(out) = K(+)(out) + H(+)(in). With respect to regulation, repressed by sodium ions Na(+). Electroneutral K(+)/H(+) efflux antiporter modulating monovalent cation and pH homeostasis in plastids, especially during plastid division and thylakoid membrane formation. Transports K(+) and Cs(+) preferentially relative to Na(+) or Li(+). May function in osmotic adjustment. Collaboratively with KEA1, adjusts alkaline stromal pH upon light to dark transitions in plastids. Together with KEA1, critical for chloroplast development, including chloroplast RNA-metabolism (e.g. rRNA maturation, polysome loading and RNA-protein interactions) and plastid gene expression (PGE), ion homeostasis, and photosynthesis. Contributes, during early seedling development, to the regulation of photosynthesis and abscisic acid- (ABA-) mediated primary root growth in a sucrose-dependent manner. Involved in the regulation of reactive oxygen and nitrogen species (ROS and RNS) metabolism. Required in roots for rapid hyperosmotic-induced Ca(2+) responses and for osmo-sensory potentiation in hyperosmotic conditions. May counteract resilience to drought and salt stress, involving photorespiratory pathway and stomata closure. In Arabidopsis thaliana (Mouse-ear cress), this protein is K(+) efflux antiporter 2, chloroplastic.